We begin with the raw amino-acid sequence, 473 residues long: GTPase Der (473 aa).

EngA-type G domains follow at residues 3-167 and 203-378; these read FTVA…GKDR and LRVA…RVWN. GTP is bound by residues 9–16, 56–60, 119–122, 209–216, 256–260, and 321–324; these read GRPNVGKS, DTAGL, NKSE, GRPNAGKS, DTAGM, and NKWD. A KH-like domain is found at 379–463; it reads KRISTARLNR…PIRIHFRSPD (85 aa).

The protein belongs to the TRAFAC class TrmE-Era-EngA-EngB-Septin-like GTPase superfamily. EngA (Der) GTPase family. In terms of assembly, associates with the 50S ribosomal subunit.

In terms of biological role, GTPase that plays an essential role in the late steps of ribosome biogenesis. The chain is GTPase Der from Rhizobium etli (strain ATCC 51251 / DSM 11541 / JCM 21823 / NBRC 15573 / CFN 42).